Reading from the N-terminus, the 2057-residue chain is Protein TIC 214 (2057 aa).

4 helical membrane-spanning segments follow: residues 13 to 33 (KIIN…AFSI), 62 to 82 (LIMG…HIAL), 158 to 178 (LFVT…CEFF), and 206 to 226 (SDYF…HSFG). The stretch at 248–340 (LILKGTDEEE…RVIQEKERKS (93 aa)) forms a coiled coil. Over residues 288–302 (NHLKKKKDRQKKQGT) the composition is skewed to basic residues. 5 disordered regions span residues 288-316 (NHLK…NSNT), 614-807 (ETHT…EEKG), 890-910 (DEQT…NDRV), 1597-1634 (EEEE…TNND), and 1724-1817 (KKKN…KSLS). Composition is skewed to basic and acidic residues over residues 621–657 (ATDK…KETK) and 665–702 (NTVD…KETK). Residues 704–713 (NASKETNTVN) are compositionally biased toward polar residues. 2 stretches are compositionally biased toward basic and acidic residues: residues 714–807 (KETK…EEKG) and 891–900 (EQTKREEKPK). Acidic residues predominate over residues 1597-1619 (EEEEINPEEEINPEEEINPEEEI). Polar residues predominate over residues 1622-1634 (SSNQKTPIGTNND). A compositionally biased stretch (basic and acidic residues) spans 1753–1817 (TNSEKKSKTN…ETDSEKKSLS (65 aa)).

Belongs to the TIC214 family. As to quaternary structure, part of the Tic complex.

The protein localises to the plastid. Its subcellular location is the chloroplast inner membrane. Involved in protein precursor import into chloroplasts. May be part of an intermediate translocation complex acting as a protein-conducting channel at the inner envelope. This Ipomoea purpurea (Common morning glory) protein is Protein TIC 214.